We begin with the raw amino-acid sequence, 392 residues long: MLYLLYEVIQNSEAGRVLNFLRYPTFRIIAAGVFALLLGMLIGPKLIARLRLKQHGQSNVREDTPDSHQKKKGTPTMGGALILLCIAAGTLLFADLKSRAVWVMLLLTLGYGFIGFLDDWLKLSKRNSKGLAGRKKMVLQTFFFLVAVFGLLTTWTLPDGSFGPTLLINTKLTLPFIPTRWFNPDLGWFYVFFAWIVVVGTSNAVNLTDGLDGLAIVPTIVSAITFAVLCYVAGTTLSIADYEVVGGASKLVATPLYQYLGILQVPGGAELAVFCAAIVGAGISFLWFNTYPASVFMGDIGSLALGGALGGLAMLSKNEVVSAIIHGIFFAEILSVMIQVTSFKMTGKRVFKMAPVHHHFELKGMAEPKIIVRFWIVSILCGGVALLSLKLR.

Helical transmembrane passes span 28 to 48 (IIAA…KLIA), 76 to 96 (TMGG…FADL), 101 to 121 (VWVM…DDWL), 137 to 157 (MVLQ…TWTL), 181 to 201 (WFNP…VVGT), 213 to 233 (GLAI…CYVA), 268 to 288 (GAEL…FLWF), 295 to 315 (VFMG…LAML), 320 to 340 (VVSA…MIQV), and 369 to 389 (KIIV…LLSL).

Belongs to the glycosyltransferase 4 family. MraY subfamily. Requires Mg(2+) as cofactor.

Its subcellular location is the cell inner membrane. It catalyses the reaction UDP-N-acetyl-alpha-D-muramoyl-L-alanyl-gamma-D-glutamyl-meso-2,6-diaminopimeloyl-D-alanyl-D-alanine + di-trans,octa-cis-undecaprenyl phosphate = di-trans,octa-cis-undecaprenyl diphospho-N-acetyl-alpha-D-muramoyl-L-alanyl-D-glutamyl-meso-2,6-diaminopimeloyl-D-alanyl-D-alanine + UMP. The protein operates within cell wall biogenesis; peptidoglycan biosynthesis. In terms of biological role, catalyzes the initial step of the lipid cycle reactions in the biosynthesis of the cell wall peptidoglycan: transfers peptidoglycan precursor phospho-MurNAc-pentapeptide from UDP-MurNAc-pentapeptide onto the lipid carrier undecaprenyl phosphate, yielding undecaprenyl-pyrophosphoryl-MurNAc-pentapeptide, known as lipid I. This chain is Phospho-N-acetylmuramoyl-pentapeptide-transferase, found in Myxococcus xanthus (strain DK1622).